The primary structure comprises 297 residues: Heme A synthase (297 aa).

The Cytoplasmic segment spans residues 1–6 (MHKRLK). Residues 7–27 (IYSVITSIGVLIVLLQGALVT) traverse the membrane as a helical segment. At 28–62 (KTGSGEGCGATWPLCFGEVIPTNPAIETIIEYSHR) the chain is on the extracellular side. A disulfide bridge connects residues Cys35 and Cys42. Glu58 is an active-site residue. Residue His61 coordinates heme o. A helical transmembrane segment spans residues 63-83 (IVSGLVGAMIIILAIWAWKQL). Over 84–93 (KHMREAKALS) the chain is Cytoplasmic. A helical transmembrane segment spans residues 94–114 (FAAVILIIFQGLLGAGAVVFG). Topologically, residues 115–118 (QSKA) are extracellular. A helical membrane pass occupies residues 119–139 (ILALHFGISAMSLAAVVLLTI). Position 123 (His123) interacts with heme o. The Cytoplasmic portion of the chain corresponds to 140 to 156 (LAFEDGREHTMAPKVSR). The chain crosses the membrane as a helical span at residues 157 to 177 (GFKYYVFFVITYCYAVIYSGA). Residues 178-210 (YVKHSEATLACAGFPLCNGQIFPGLYGPVGAHY) are Extracellular-facing. Residues Cys188 and Cys194 are joined by a disulfide bond. The helical transmembrane segment at 211 to 231 (FHRVVGTILLLFLLILMIWTL) threads the bilayer. Residue His212 participates in heme b binding. The Cytoplasmic portion of the chain corresponds to 232–242 (SRYRHYRVLTW). Residues 243–263 (TAVLSFLLVVGQFISGISIVF) form a helical membrane-spanning segment. Residues 264 to 271 (TQNALSVG) lie on the Extracellular side of the membrane. A helical membrane pass occupies residues 272–292 (LIHALIISILFSALSYMTMII). Position 274 (His274) interacts with heme b. The Cytoplasmic segment spans residues 293–297 (TRPSH).

Belongs to the COX15/CtaA family. Type 1 subfamily. As to quaternary structure, interacts with CtaB. Heme b is required as a cofactor.

It localises to the cell membrane. The enzyme catalyses Fe(II)-heme o + 2 A + H2O = Fe(II)-heme a + 2 AH2. It participates in porphyrin-containing compound metabolism; heme A biosynthesis; heme A from heme O: step 1/1. In terms of biological role, catalyzes the conversion of heme O to heme A by two successive hydroxylations of the methyl group at C8. The first hydroxylation forms heme I, the second hydroxylation results in an unstable dihydroxymethyl group, which spontaneously dehydrates, resulting in the formyl group of heme A. The chain is Heme A synthase from Alkalihalophilus pseudofirmus (strain ATCC BAA-2126 / JCM 17055 / OF4) (Bacillus pseudofirmus).